We begin with the raw amino-acid sequence, 192 residues long: PBAN-type neuropeptides (192 aa).

Residues 1-23 (MYKTNIVFNVLALALFSIFFASC) form the signal peptide. Leucine 47 carries the leucine amide modification. Residues 51–94 (SMKPSTEDNRQTFLRLLEAADALKFYYDQLPYERQADEPETKVT) constitute a propeptide that is removed on maturation. 4 positions are modified to leucine amide: leucine 103, leucine 122, leucine 158, and leucine 168. Residues 171–192 (ELSYDYPTKYRVARSVNKTMDN) constitute a propeptide that is removed on maturation.

The protein belongs to the pyrokinin family. As to expression, expression is restricted to the subesophageal ganglion.

Its subcellular location is the secreted. Functionally, a hormone that controls sex pheromone production in females and pheromone responsiveness in male. Also mediates visceral muscle contractile activity (myotropic activity). Identical to MRCH which is implicated in the formation of both melanin in the cuticle and ommochrome in the epidermis of armyworm species. Its function is as follows. Diapause hormone (DH) is responsible for induction of embryonic diapause. The three SGNPS are far less active than DH in inducing diapause eggs. Beta-SGNP expressed higher pban activity than PBAN-I, but alpha- and gamma-SGNP were far less active in pheromonotropic activity. The protein is PBAN-type neuropeptides of Bombyx mori (Silk moth).